The following is a 555-amino-acid chain: Formate--tetrahydrofolate ligase (555 aa).

64 to 71 (TKAGIGKT) lines the ATP pocket.

Belongs to the formate--tetrahydrofolate ligase family.

It catalyses the reaction (6S)-5,6,7,8-tetrahydrofolate + formate + ATP = (6R)-10-formyltetrahydrofolate + ADP + phosphate. It participates in one-carbon metabolism; tetrahydrofolate interconversion. The chain is Formate--tetrahydrofolate ligase from Bacteroides thetaiotaomicron (strain ATCC 29148 / DSM 2079 / JCM 5827 / CCUG 10774 / NCTC 10582 / VPI-5482 / E50).